Reading from the N-terminus, the 241-residue chain is Phosphoadenosine 5'-phosphosulfate reductase (241 aa).

Cys235 serves as the catalytic Nucleophile; cysteine thiosulfonate intermediate.

The protein belongs to the PAPS reductase family. CysH subfamily.

It localises to the cytoplasm. It carries out the reaction [thioredoxin]-disulfide + sulfite + adenosine 3',5'-bisphosphate + 2 H(+) = [thioredoxin]-dithiol + 3'-phosphoadenylyl sulfate. Its pathway is sulfur metabolism; hydrogen sulfide biosynthesis; sulfite from sulfate: step 3/3. Catalyzes the formation of sulfite from phosphoadenosine 5'-phosphosulfate (PAPS) using thioredoxin as an electron donor. This Xanthomonas axonopodis pv. citri (strain 306) protein is Phosphoadenosine 5'-phosphosulfate reductase.